The chain runs to 335 residues: SAM pointed domain-containing Ets transcription factor (335 aa).

The segment covering 1–20 (MGSASPGLSSVSPSHLLLPP) has biased composition (low complexity). Disordered regions lie at residues 1 to 25 (MGSASPGLSSVSPSHLLLPPDTVSR) and 75 to 100 (AKAPGASSREEPPEEPEQCPVIDSQA). Positions 129–213 (EVLKDIETAC…AHLDIWKSAA (85 aa)) constitute a PNT domain. The ETS DNA-binding region spans 249–332 (IHLWQFLKEL…ISQRLVYQFV (84 aa)).

This sequence belongs to the ETS family. In terms of assembly, interacts with the DNA-binding domain of the androgen receptor. Interacts with NKX3-1. Expressed in a very restricted set of primarily hormone-regulated epithelial tissues with particularly high expression in the prostate gland. Significantly lower expression is seen in other hormone regulated tissues such as mammary gland, salivary gland, and ovary. Expressed in prostate carcinoma cells.

It localises to the nucleus. Functionally, may function as an androgen-independent transactivator of the prostate-specific antigen (PSA) promoter. Binds to 5'-GGAT-3' DNA sequences. May play a role in the regulation of the prostate gland and/or prostate cancer development. Acts as a transcriptional activator for SERPINB5 promoter. The chain is SAM pointed domain-containing Ets transcription factor (SPDEF) from Homo sapiens (Human).